A 312-amino-acid chain; its full sequence is Thioredoxin reductase (312 aa).

33–43 (EGFFSGIAGGQ) contacts FAD. Cysteine 138 and cysteine 141 are oxidised to a cystine. FAD is bound at residue 283–292 (DVQDKYYRQA).

This sequence belongs to the class-II pyridine nucleotide-disulfide oxidoreductase family. As to quaternary structure, homodimer. Requires FAD as cofactor.

It is found in the cytoplasm. It catalyses the reaction [thioredoxin]-dithiol + NADP(+) = [thioredoxin]-disulfide + NADPH + H(+). The chain is Thioredoxin reductase (trxB) from Chlamydia trachomatis serovar D (strain ATCC VR-885 / DSM 19411 / UW-3/Cx).